The following is a 620-amino-acid chain: Apoptosis regulator MC163R (620 aa).

The helical transmembrane segment at 113-133 threads the bilayer; sequence APLPLLLLPLLLPPMILLFFL.

It is found in the host mitochondrion. The protein localises to the host membrane. Its function is as follows. Plays a role in the inhibition of host apoptosis. Prevents host TNF-alpha-induced mitochondrial membrane permeabilization and reduces caspase-3/CASP3 and PARP1 cleavage induced by the intrinsic apoptotic pathway. This chain is Apoptosis regulator MC163R (MC163R), found in Homo sapiens (Human).